The primary structure comprises 509 residues: Glycerol kinase (509 aa).

ADP is bound at residue Thr-12. Residues Thr-12, Thr-13, and Ser-14 each coordinate ATP. A sn-glycerol 3-phosphate-binding site is contributed by Thr-12. Arg-16 contacts ADP. Arg-82, Glu-83, Tyr-134, and Asp-245 together coordinate sn-glycerol 3-phosphate. Residues Arg-82, Glu-83, Tyr-134, Asp-245, and Gln-246 each coordinate glycerol. Residues Thr-267 and Gly-311 each contribute to the ADP site. Thr-267, Gly-311, Gln-315, and Gly-412 together coordinate ATP. The ADP site is built by Gly-412 and Asn-416.

This sequence belongs to the FGGY kinase family.

It carries out the reaction glycerol + ATP = sn-glycerol 3-phosphate + ADP + H(+). The protein operates within polyol metabolism; glycerol degradation via glycerol kinase pathway; sn-glycerol 3-phosphate from glycerol: step 1/1. Its activity is regulated as follows. Inhibited by fructose 1,6-bisphosphate (FBP). Functionally, key enzyme in the regulation of glycerol uptake and metabolism. Catalyzes the phosphorylation of glycerol to yield sn-glycerol 3-phosphate. In Rhizorhabdus wittichii (strain DSM 6014 / CCUG 31198 / JCM 15750 / NBRC 105917 / EY 4224 / RW1) (Sphingomonas wittichii), this protein is Glycerol kinase.